The chain runs to 1070 residues: Protocadherin-8 (1070 aa).

An N-terminal signal peptide occupies residues 1 to 29; sequence MSPAKRWGSPCLFPLQLFSLCWVLSVAQS. Cadherin domains lie at 30-135, 136-245, 247-354, 393-497, 498-609, and 615-721; these read KTVR…APRF, PRAQ…SPAF, QGAV…APEI, QEAG…APIF, TKPV…SPIL, and ANGS…VPAS. The Extracellular segment spans residues 30–747; the sequence is KTVRYSTFEE…SGPSLQWDTP (718 aa). The N-linked (GlcNAc...) asparagine glycan is linked to Asn616. Residues 716 to 725 show a composition bias toward low complexity; that stretch reads SAVPASSGSP. Positions 716 to 740 are disordered; it reads SAVPASSGSPEHSRPPGSRLAPSGP. The chain crosses the membrane as a helical span at residues 748–768; it reads LIVIIVLAGSCTLLLAAIIAI. At 769-1070 the chain is on the cytoplasmic side; it reads ATTCNRRKKE…SPKKGINENV (302 aa). 3 disordered regions span residues 777-859, 906-928, and 1046-1070; these read KEVR…TGES, REAE…DSDS, and IGVP…NENV. Basic and acidic residues-rich tracts occupy residues 780–790 and 906–921; these read RKGGALREERP and REAE…KGDS. The residue at position 1053 (Ser1053) is a Phosphoserine.

As to quaternary structure, the N-terminal extracellular domain forms homophilic interactions; these interactions activate p38 MAPK via TAOK2 and trigger endocytosis. Interacts with CDH2; this interaction may lead to CDH2 cointernalization. Interacts with CDH11. Interacts with TAOK2.

Its subcellular location is the cell membrane. The protein localises to the cell projection. It is found in the dendrite. It localises to the presynaptic cell membrane. The protein resides in the postsynaptic cell membrane. In terms of biological role, calcium-dependent cell-adhesion protein. May play a role in activity-induced synaptic reorganization underlying long term memory. Could be involved in CDH2 internalization through TAOK2/p38 MAPK pathway. In hippocampal neurons, may play a role in the down-regulation of dendritic spines, maybe through its action on CDH2 endocytosis. This is Protocadherin-8 (Pcdh8) from Mus musculus (Mouse).